Consider the following 552-residue polypeptide: Phosphoglucomutase (552 aa).

The active-site Phosphoserine intermediate is the serine 143. Mg(2+) is bound by residues serine 143, aspartate 295, aspartate 297, and aspartate 299.

The protein belongs to the phosphohexose mutase family. It depends on Mg(2+) as a cofactor.

The catalysed reaction is alpha-D-glucose 1-phosphate = alpha-D-glucose 6-phosphate. Its pathway is glycolipid metabolism; diglucosyl-diacylglycerol biosynthesis. Catalyzes the interconversion between glucose-6-phosphate and alpha-glucose-1-phosphate. This is the first step in the biosynthesis of diglucosyl-diacylglycerol (Glc2-DAG), i.e. the predominant glycolipid found in the S.aureus membrane, which is also used as a membrane anchor for lipoteichoic acid (LTA). The protein is Phosphoglucomutase (pgcA) of Staphylococcus aureus (strain MSSA476).